The chain runs to 92 residues: Small ribosomal subunit protein uS19 (92 aa).

The protein belongs to the universal ribosomal protein uS19 family.

In terms of biological role, protein S19 forms a complex with S13 that binds strongly to the 16S ribosomal RNA. The sequence is that of Small ribosomal subunit protein uS19 from Bartonella quintana (strain Toulouse) (Rochalimaea quintana).